The chain runs to 183 residues: Ribose 1,5-bisphosphate phosphokinase PhnN (183 aa).

6 to 13 (GPSGAGKD) serves as a coordination point for ATP.

It belongs to the ribose 1,5-bisphosphokinase family.

The catalysed reaction is alpha-D-ribose 1,5-bisphosphate + ATP = 5-phospho-alpha-D-ribose 1-diphosphate + ADP. The protein operates within metabolic intermediate biosynthesis; 5-phospho-alpha-D-ribose 1-diphosphate biosynthesis; 5-phospho-alpha-D-ribose 1-diphosphate from D-ribose 5-phosphate (route II): step 3/3. In terms of biological role, catalyzes the phosphorylation of ribose 1,5-bisphosphate to 5-phospho-D-ribosyl alpha-1-diphosphate (PRPP). In Agrobacterium fabrum (strain C58 / ATCC 33970) (Agrobacterium tumefaciens (strain C58)), this protein is Ribose 1,5-bisphosphate phosphokinase PhnN.